The sequence spans 184 residues: ATP synthase subunit b, chloroplastic (184 aa).

A helical transmembrane segment spans residues 27–49 (LATNLINLSVVLGVLIFFGKGVL).

The protein belongs to the ATPase B chain family. F-type ATPases have 2 components, F(1) - the catalytic core - and F(0) - the membrane proton channel. F(1) has five subunits: alpha(3), beta(3), gamma(1), delta(1), epsilon(1). F(0) has four main subunits: a(1), b(1), b'(1) and c(10-14). The alpha and beta chains form an alternating ring which encloses part of the gamma chain. F(1) is attached to F(0) by a central stalk formed by the gamma and epsilon chains, while a peripheral stalk is formed by the delta, b and b' chains.

The protein resides in the plastid. It localises to the chloroplast thylakoid membrane. Functionally, f(1)F(0) ATP synthase produces ATP from ADP in the presence of a proton or sodium gradient. F-type ATPases consist of two structural domains, F(1) containing the extramembraneous catalytic core and F(0) containing the membrane proton channel, linked together by a central stalk and a peripheral stalk. During catalysis, ATP synthesis in the catalytic domain of F(1) is coupled via a rotary mechanism of the central stalk subunits to proton translocation. Its function is as follows. Component of the F(0) channel, it forms part of the peripheral stalk, linking F(1) to F(0). The protein is ATP synthase subunit b, chloroplastic of Lactuca sativa (Garden lettuce).